The chain runs to 156 residues: E3 ubiquitin-protein ligase RNF181 (156 aa).

Residues 79 to 120 (CPVCLLEFEEGETVRQLPCEHLFHSSCILPWLGKTNSCPLCR) form an RING-type; atypical zinc finger.

This sequence belongs to the RNF181 family.

It catalyses the reaction S-ubiquitinyl-[E2 ubiquitin-conjugating enzyme]-L-cysteine + [acceptor protein]-L-lysine = [E2 ubiquitin-conjugating enzyme]-L-cysteine + N(6)-ubiquitinyl-[acceptor protein]-L-lysine.. The protein operates within protein modification; protein ubiquitination. Its function is as follows. E3 ubiquitin-protein ligase which accepts ubiquitin from an E2 ubiquitin-conjugating enzyme in the form of a thioester and then directly transfers the ubiquitin to targeted substrates. Catalyzes monoubiquitination of 26S proteasome subunit PSMC2/RPT1. This chain is E3 ubiquitin-protein ligase RNF181 (rnf181), found in Xenopus tropicalis (Western clawed frog).